The primary structure comprises 332 residues: Inositol 2-dehydrogenase 2 (332 aa).

It belongs to the Gfo/Idh/MocA family. In terms of assembly, homotetramer.

The catalysed reaction is myo-inositol + NAD(+) = scyllo-inosose + NADH + H(+). Functionally, involved in the oxidation of myo-inositol (MI) to 2-keto-myo-inositol (2KMI or 2-inosose). The sequence is that of Inositol 2-dehydrogenase 2 from Paenarthrobacter aurescens (strain TC1).